The following is a 219-amino-acid chain: MTNILIVEDEQNLARFIELELTHENYTVDIENDGKVGLDKALSKPYDLYILDLMLPNINGLEICRQIRQKTTTPIIIITAKSETYDKVAGLDYGADDYIVKPFDIEELLARIRAVLRRQPDKDVLDINGIIIDKDAFKVTVNGHQLELTKTEYDLLYVLAENRNHVMQREQILDHVWGYNSEVETNVVDVYIRYLRNKLKPFNKEKSIETVRGVGYVIR.

The region spanning 3–116 (NILIVEDEQN…ELLARIRAVL (114 aa)) is the Response regulatory domain. Asp-52 is subject to 4-aspartylphosphate. Positions 122 to 219 (KDVLDINGII…TVRGVGYVIR (98 aa)) form a DNA-binding region, ompR/PhoB-type.

Post-translationally, phosphorylated by ArlS.

The protein resides in the cytoplasm. In terms of biological role, member of the two-component regulatory system ArlS/ArlR. This is Response regulator ArlR (arlR) from Staphylococcus epidermidis (strain ATCC 12228 / FDA PCI 1200).